Reading from the N-terminus, the 238-residue chain is ATP synthase subunit a (238 aa).

Transmembrane regions (helical) follow at residues 18–38 (LTIL…VFWA), 75–95 (YSLL…LGLM), 112–132 (NFGV…IEGI), 179–199 (VVTG…PLAF), and 203–223 (IVWT…FIIL).

This sequence belongs to the ATPase A chain family. F-type ATPases have 2 components, CF(1) - the catalytic core - and CF(0) - the membrane proton channel. CF(1) has five subunits: alpha(3), beta(3), gamma(1), delta(1), epsilon(1). CF(0) has three main subunits: a(1), b(2) and c(9-12). The alpha and beta chains form an alternating ring which encloses part of the gamma chain. CF(1) is attached to CF(0) by a central stalk formed by the gamma and epsilon chains, while a peripheral stalk is formed by the delta and b chains.

It localises to the cell membrane. Key component of the proton channel; it plays a direct role in the translocation of protons across the membrane. This chain is ATP synthase subunit a, found in Streptococcus agalactiae serotype III (strain NEM316).